The following is a 773-amino-acid chain: 3-isopropylmalate dehydratase (773 aa).

[4Fe-4S] cluster contacts are provided by Cys-355, Cys-415, and Cys-418.

This sequence belongs to the aconitase/IPM isomerase family. As to quaternary structure, monomer. Requires [4Fe-4S] cluster as cofactor.

The catalysed reaction is (2R,3S)-3-isopropylmalate = (2S)-2-isopropylmalate. The protein operates within amino-acid biosynthesis; L-leucine biosynthesis; L-leucine from 3-methyl-2-oxobutanoate: step 2/4. Functionally, catalyzes the isomerization between 2-isopropylmalate and 3-isopropylmalate, via the formation of 2-isopropylmaleate. The polypeptide is 3-isopropylmalate dehydratase (LEU1) (Mycosarcoma maydis (Corn smut fungus)).